We begin with the raw amino-acid sequence, 370 residues long: MALMKKSLSAALLSSPLLIICLIALLADPFSVGARRLLEDPKPEIPKLPELPKFEVPKLPEFPKPELPKLPEFPKPELPKIPEIPKPELPKVPEIPKPEETKLPDIPKLELPKFPEIPKPELPKMPEIPKPELPKVPEIQKPELPKMPEIPKPELPKFPEIPKPDLPKFPENSKPEVPKLMETEKPEAPKVPEIPKPELPKLPEVPKLEAPKVPEIQKPELPKMPELPKMPEIQKPELPKLPEVPKLEAPKVPEIQKPELPKMPELPKMPEIQKPELPKMPEIQKPELPKVPEVPKPELPTVPEVPKSEAPKFPEIPKPELPKIPEVPKPELPKVPEITKPAVPEIPKPELPTMPQLPKLPEFPKVPGTP.

The N-terminal stretch at 1–34 (MALMKKSLSAALLSSPLLIICLIALLADPFSVGA) is a signal peptide. Tandem repeats lie at residues 43–47 (PEIPK), 49–53 (PELPK), 54–58 (FEVPK), 60–64 (PEFPK), 65–69 (PELPK), 71–75 (PEFPK), 76–80 (PELPK), 82–86 (PEIPK), 87–91 (PELPK), 93–97 (PEIPK), 98–102 (PEETK), 104–108 (PDIPK), 109–113 (LELPK), 115–119 (PEIPK), 120–124 (PELPK), 126–130 (PEIPK), 131–135 (PELPK), 137–141 (PEIQK), 142–146 (PELPK), 148–152 (PEIPK), 153–157 (PELPK), 159–163 (PEIPK), 164–168 (PDLPK), 175–179 (PEVPK), 186–190 (PEAPK), 192–196 (PEIPK), 197–201 (PELPK), 203–207 (PEVPK), 214–218 (PEIQK), 219–223 (PELPK), 225–229 (PELPK), 231–235 (PEIQK), 236–240 (PELPK), 242–246 (PEVPK), 247–251 (LEAPK), 253–257 (PEIQK), 258–262 (PELPK), 264–268 (PELPK), 270–274 (PEIQK), 275–279 (PELPK), 281–285 (PEIQK), 286–290 (PELPK), 292–296 (PEVPK), 303–307 (PEVPK), 314–318 (PEIPK), 319–323 (PELPK), 325–329 (PEVPK), 330–334 (PELPK), 336–340 (PEITK), 344–348 (PEIPK), 355–359 (PQLPK), and 361–365 (PEFPK). Positions 43–365 (PEIPKLPELP…QLPKLPEFPK (323 aa)) are 52 X 5 AA tandem repeat of P-[DEGQ]-[AEFLIV]-[QPT]-K. Over residues 65–223 (PELPKLPEFP…PEIQKPELPK (159 aa)) the composition is skewed to basic and acidic residues. Residues 65–370 (PELPKLPEFP…PEFPKVPGTP (306 aa)) form a disordered region. The segment covering 232–262 (EIQKPELPKLPEVPKLEAPKVPEIQKPELPK) has biased composition (basic and acidic residues). 2 stretches are compositionally biased toward basic and acidic residues: residues 271–296 (EIQK…EVPK) and 306–334 (PKSE…ELPK).

It localises to the secreted. The protein resides in the cell wall. Positive regulator of germination and plant growth. In Arabidopsis thaliana (Mouse-ear cress), this protein is Protein PELPK1.